The chain runs to 337 residues: Ketol-acid reductoisomerase (NADP(+)) (337 aa).

The region spanning 3–183 (VEVFYDDDAD…GGTRAGAIRT (181 aa)) is the KARI N-terminal Rossmann domain. NADP(+)-binding positions include 26 to 29 (YGSQ), Ser52, Ser54, and 84 to 87 (DTAQ). His109 is an active-site residue. Position 135 (Gly135) interacts with NADP(+). Residues 184–329 (TFTEETETDL…SKLRGMMSWV (146 aa)) enclose the KARI C-terminal knotted domain. Positions 192, 196, 228, and 232 each coordinate Mg(2+). Ser253 contacts substrate.

Belongs to the ketol-acid reductoisomerase family. Mg(2+) is required as a cofactor.

The catalysed reaction is (2R)-2,3-dihydroxy-3-methylbutanoate + NADP(+) = (2S)-2-acetolactate + NADPH + H(+). It carries out the reaction (2R,3R)-2,3-dihydroxy-3-methylpentanoate + NADP(+) = (S)-2-ethyl-2-hydroxy-3-oxobutanoate + NADPH + H(+). It functions in the pathway amino-acid biosynthesis; L-isoleucine biosynthesis; L-isoleucine from 2-oxobutanoate: step 2/4. Its pathway is amino-acid biosynthesis; L-valine biosynthesis; L-valine from pyruvate: step 2/4. Involved in the biosynthesis of branched-chain amino acids (BCAA). Catalyzes an alkyl-migration followed by a ketol-acid reduction of (S)-2-acetolactate (S2AL) to yield (R)-2,3-dihydroxy-isovalerate. In the isomerase reaction, S2AL is rearranged via a Mg-dependent methyl migration to produce 3-hydroxy-3-methyl-2-ketobutyrate (HMKB). In the reductase reaction, this 2-ketoacid undergoes a metal-dependent reduction by NADPH to yield (R)-2,3-dihydroxy-isovalerate. The sequence is that of Ketol-acid reductoisomerase (NADP(+)) from Salinispora arenicola (strain CNS-205).